A 283-amino-acid chain; its full sequence is Diaminopimelate epimerase (283 aa).

Substrate contacts are provided by Asn13, Gln45, and Asn65. Cys74 serves as the catalytic Proton donor. Substrate is bound by residues 75–76 (GN), Asn156, Asn190, and 208–209 (ER). Cys217 acts as the Proton acceptor in catalysis. Substrate is bound at residue 218–219 (GS).

The protein belongs to the diaminopimelate epimerase family. As to quaternary structure, homodimer.

Its subcellular location is the cytoplasm. It catalyses the reaction (2S,6S)-2,6-diaminopimelate = meso-2,6-diaminopimelate. It participates in amino-acid biosynthesis; L-lysine biosynthesis via DAP pathway; DL-2,6-diaminopimelate from LL-2,6-diaminopimelate: step 1/1. Its function is as follows. Catalyzes the stereoinversion of LL-2,6-diaminopimelate (L,L-DAP) to meso-diaminopimelate (meso-DAP), a precursor of L-lysine and an essential component of the bacterial peptidoglycan. The sequence is that of Diaminopimelate epimerase from Bartonella tribocorum (strain CIP 105476 / IBS 506).